A 383-amino-acid chain; its full sequence is Sulfate adenylyltransferase (383 aa).

This sequence belongs to the sulfate adenylyltransferase family.

The catalysed reaction is sulfate + ATP + H(+) = adenosine 5'-phosphosulfate + diphosphate. The protein operates within sulfur metabolism; hydrogen sulfide biosynthesis; sulfite from sulfate: step 1/3. This chain is Sulfate adenylyltransferase, found in Halothermothrix orenii (strain H 168 / OCM 544 / DSM 9562).